The following is a 418-amino-acid chain: AP-3 complex subunit mu-1 (418 aa).

The MHD domain occupies 176-417; the sequence is NNEAYFDVVE…VTKAGKFQVR (242 aa).

Belongs to the adaptor complexes medium subunit family. As to quaternary structure, adaptor protein complex 3 (AP-3) is a heterotetramer composed of two large adaptins (delta-type subunit AP3D1 and beta-type subunit AP3B1 or AP3B2), a medium adaptin (mu-type subunit AP3M1 or AP3M2) and a small adaptin (sigma-type subunit APS1 or AP3S2). Interacts with AGAP1. AP-3 associates with the BLOC-1 complex.

Its subcellular location is the golgi apparatus. The protein resides in the cytoplasmic vesicle membrane. Functionally, part of the AP-3 complex, an adaptor-related complex which is not clathrin-associated. The complex is associated with the Golgi region as well as more peripheral structures. It facilitates the budding of vesicles from the Golgi membrane and may be directly involved in trafficking to lysosomes. In concert with the BLOC-1 complex, AP-3 is required to target cargos into vesicles assembled at cell bodies for delivery into neurites and nerve terminals. The polypeptide is AP-3 complex subunit mu-1 (Ap3m1) (Mus musculus (Mouse)).